The chain runs to 191 residues: MSEQLTDQVLVERVQKGDQKAFNLLVVRYQHKVASLVSRYVPSGDVPDVVQEAFIKAYRALDSFRGDSAFYTWLYRIAVNTAKNYLVAQGRRPPSSDVDAIEAENFESGGALKEISNPENLMLSEELRQIVFRTIESLPEDLRMAITLRELDGLSYEEIAAIMDCPVGTVRSRIFRAREAIDNKVQPLIRR.

Positions 1 to 153 (MSEQLTDQVL…MAITLRELDG (153 aa)) are binds RNAP core. The sigma-70 factor domain-2 stretch occupies residues 25–92 (LVVRYQHKVA…KNYLVAQGRR (68 aa)). Positions 48–61 (DVVQEAFIKAYRAL) match the Polymerase core binding motif. The sigma-70 factor domain-4 stretch occupies residues 129–180 (QIVFRTIESLPEDLRMAITLRELDGLSYEEIAAIMDCPVGTVRSRIFRAREA). Residues 156–175 (YEEIAAIMDCPVGTVRSRIF) constitute a DNA-binding region (H-T-H motif).

This sequence belongs to the sigma-70 factor family. ECF subfamily. As to quaternary structure, interacts transiently with the RNAP catalytic core formed by RpoA, RpoB, RpoC and RpoZ (2 alpha, 1 beta, 1 beta' and 1 omega subunit) to form the RNAP holoenzyme that can initiate transcription. Interacts 1:1 with anti-sigma-E factor RseA which prevents binding to RNAP catalytic core.

The protein resides in the cytoplasm. With respect to regulation, ECF sigma-E is held in an inactive form by its cognate anti-sigma factor (RseA) until released by regulated intramembrane proteolysis (RIP). RIP occurs when an extracytoplasmic signal (periplasmic stress and excess LPS) triggers a concerted proteolytic cascade to transmit information and elicit cellular responses. The anti-sigma factor RseA is an inner membrane protein, binding sigma-E in the cytoplasm and RseB in the periplasm. RseA is first cut extracytoplasmically (site-1 protease, S1P, by DegS), then within the membrane itself (site-2 protease, S2P, by RseP), while cytoplasmic proteases (predominantly ClpX-ClpP) finish degrading the regulatory protein, liberating sigma-E. Degradation of RseA requires 2 signals to activate DegS; an outer membrane protein (OMP) signal activates DegS, while an LPS signal causes release of RseB from RseA, freeing RseA to be cleaved. In terms of biological role, sigma factors are initiation factors that promote the attachment of RNA polymerase (RNAP) to specific initiation sites and are then released. Extracytoplasmic function (ECF) sigma-E controls the envelope stress response, responding to periplasmic protein stress, increased levels of periplasmic lipopolysaccharide (LPS) as well as heat shock and oxidative stress; it controls protein processing in the extracytoplasmic compartment. The protein is ECF RNA polymerase sigma-E factor (rpoE) of Escherichia coli O157:H7.